The chain runs to 104 residues: Large ribosomal subunit protein bL21 (104 aa).

It belongs to the bacterial ribosomal protein bL21 family. In terms of assembly, part of the 50S ribosomal subunit. Contacts protein L20.

Its function is as follows. This protein binds to 23S rRNA in the presence of protein L20. The sequence is that of Large ribosomal subunit protein bL21 from Helicobacter pylori (strain J99 / ATCC 700824) (Campylobacter pylori J99).